Here is a 350-residue protein sequence, read N- to C-terminus: UDP-N-acetylenolpyruvoylglucosamine reductase (350 aa).

Residues 25 to 194 form the FAD-binding PCMH-type domain; that stretch reads VGPVARRLIT…LDVGGRSAPL (170 aa). The active site involves arginine 166. The active-site Proton donor is the serine 243. The active site involves glutamate 342.

This sequence belongs to the MurB family. FAD serves as cofactor.

It localises to the cytoplasm. It catalyses the reaction UDP-N-acetyl-alpha-D-muramate + NADP(+) = UDP-N-acetyl-3-O-(1-carboxyvinyl)-alpha-D-glucosamine + NADPH + H(+). The protein operates within cell wall biogenesis; peptidoglycan biosynthesis. Its function is as follows. Cell wall formation. This chain is UDP-N-acetylenolpyruvoylglucosamine reductase, found in Mycobacterium sp. (strain MCS).